The chain runs to 155 residues: MMGLLQRVREARVEIDGETVGRIGPGLLVLVCAERGDTQAEADRLLDKLLRLRIFADEAGKMNRSVQDTGGGLLLVSQFTLAADTRGGNRPSFTQAAAPDDGRRLYDHFVARARALHPVVETGRFAAEMQVHLVNDGPVTIPLRIAPPGTVQNGP.

Residues 137 to 138 (GP) carry the Gly-cisPro motif, important for rejection of L-amino acids motif.

Belongs to the DTD family. In terms of assembly, homodimer.

The protein resides in the cytoplasm. The enzyme catalyses glycyl-tRNA(Ala) + H2O = tRNA(Ala) + glycine + H(+). It carries out the reaction a D-aminoacyl-tRNA + H2O = a tRNA + a D-alpha-amino acid + H(+). Its function is as follows. An aminoacyl-tRNA editing enzyme that deacylates mischarged D-aminoacyl-tRNAs. Also deacylates mischarged glycyl-tRNA(Ala), protecting cells against glycine mischarging by AlaRS. Acts via tRNA-based rather than protein-based catalysis; rejects L-amino acids rather than detecting D-amino acids in the active site. By recycling D-aminoacyl-tRNA to D-amino acids and free tRNA molecules, this enzyme counteracts the toxicity associated with the formation of D-aminoacyl-tRNA entities in vivo and helps enforce protein L-homochirality. This is D-aminoacyl-tRNA deacylase from Paracidovorax citrulli (strain AAC00-1) (Acidovorax citrulli).